A 617-amino-acid chain; its full sequence is V-type proton ATPase catalytic subunit A (617 aa).

257–264 provides a ligand contact to ATP; the sequence is GAFGCGKT.

This sequence belongs to the ATPase alpha/beta chains family. V-ATPase is a heteromultimeric enzyme composed of a peripheral catalytic V1 complex (components A to H) attached to an integral membrane V0 proton pore complex (components: a, c, c', c'', d, e, f and VOA1).

The protein resides in the vacuole membrane. The enzyme catalyses ATP + H2O + 4 H(+)(in) = ADP + phosphate + 5 H(+)(out). Functionally, catalytic subunit of the V1 complex of vacuolar(H+)-ATPase (V-ATPase), a multisubunit enzyme composed of a peripheral complex (V1) that hydrolyzes ATP and a membrane integral complex (V0) that translocates protons. V-ATPase is responsible for acidifying and maintaining the pH of intracellular compartments. The polypeptide is V-type proton ATPase catalytic subunit A (VMA1) (Eremothecium gossypii (strain ATCC 10895 / CBS 109.51 / FGSC 9923 / NRRL Y-1056) (Yeast)).